Here is a 1243-residue protein sequence, read N- to C-terminus: Inositol hexakisphosphate and diphosphoinositol-pentakisphosphate kinase 2 (1243 aa).

Phosphoserine is present on Ser38. 53 to 54 (KK) serves as a coordination point for substrate. The ATP site is built by Arg134, Lys187, His194, and Arg213. 213 to 214 (RK) serves as a coordination point for substrate. Ser223 carries the post-translational modification Phosphoserine. ATP is bound by residues 237–240 (EEFM) and 246–248 (DVK). Positions 248 and 262 each coordinate substrate. ATP contacts are provided by residues Ser264, Asp309, and 321–323 (DVN). 326–329 (SFVK) serves as a coordination point for substrate. The segment at 371-442 (PTTSGTMMEL…VLDIARQLLM (72 aa)) is polyphosphoinositide-binding domain. 2 disordered regions span residues 898–941 (KGCE…RDEV) and 957–1016 (HIHR…SPVS). Basic and acidic residues predominate over residues 915-941 (ASRENEGRRPFKIDNDDEPHTSKRDEV). A compositionally biased stretch (basic residues) spans 958 to 969 (IHRKSPLPRSRK). Residues Ser1006, Ser1016, Ser1074, Ser1091, Ser1165, Ser1172, and Ser1180 each carry the phosphoserine modification. Residues 1185–1243 (TPAKILPTPPATLKSTKASSKPATSGPSSAVVPNTSSRKKNITSKTETHEHKKNTGKKK) are disordered. Positions 1195–1209 (ATLKSTKASSKPATS) are enriched in low complexity. Over residues 1210–1220 (GPSSAVVPNTS) the composition is skewed to polar residues. A phosphoserine mark is found at Ser1220 and Ser1221.

This sequence belongs to the histidine acid phosphatase family. VIP1 subfamily.

It localises to the cytoplasm. It is found in the cytosol. It catalyses the reaction 1D-myo-inositol hexakisphosphate + ATP = 1-diphospho-1D-myo-inositol 2,3,4,5,6-pentakisphosphate + ADP. The catalysed reaction is 5-diphospho-1D-myo-inositol 1,2,3,4,6-pentakisphosphate + ATP + H(+) = 1,5-bis(diphospho)-1D-myo-inositol 2,3,4,6-tetrakisphosphate + ADP. Functionally, bifunctional inositol kinase that acts in concert with the IP6K kinases IP6K1, IP6K2 and IP6K3 to synthesize the diphosphate group-containing inositol pyrophosphates diphosphoinositol pentakisphosphate, PP-InsP5, and bis-diphosphoinositol tetrakisphosphate, (PP)2-InsP4. PP-InsP5 and (PP)2-InsP4, also respectively called InsP7 and InsP8, regulate a variety of cellular processes, including apoptosis, vesicle trafficking, cytoskeletal dynamics, exocytosis, insulin signaling and neutrophil activation. Phosphorylates inositol hexakisphosphate (InsP6) at position 1 to produce PP-InsP5 which is in turn phosphorylated by IP6Ks to produce (PP)2-InsP4. Alternatively, phosphorylates PP-InsP5 at position 1, produced by IP6Ks from InsP6, to produce (PP)2-InsP4. Required for normal hearing. In Homo sapiens (Human), this protein is Inositol hexakisphosphate and diphosphoinositol-pentakisphosphate kinase 2.